Here is a 580-residue protein sequence, read N- to C-terminus: Protein O-linked-mannose beta-1,4-N-acetylglucosaminyltransferase 2 (580 aa).

Over 1-4 the chain is Cytoplasmic; it reads MHLS. Residues 5–25 form a helical; Signal-anchor for type II membrane protein membrane-spanning segment; it reads AVFNALLVSVLAAVLWKHVRL. The Lumenal portion of the chain corresponds to 26–580; sequence REHAATLEEE…PFADVLVCNT (555 aa). Asn99 and Asn276 each carry an N-linked (GlcNAc...) asparagine glycan. Residues 488 to 580 enclose the Fibronectin type-III domain; the sequence is ARCQASVHGA…PFADVLVCNT (93 aa).

The protein belongs to the glycosyltransferase 61 family. As to expression, highly expressed in the brain, muscle, heart, and kidney in both fetus and adult. In the brain, highest expression in the cortex and cerebellum. Highly expressed in the pancreas.

The protein localises to the endoplasmic reticulum membrane. It carries out the reaction 3-O-(alpha-D-mannosyl)-L-threonyl-[protein] + UDP-N-acetyl-alpha-D-glucosamine = 3-O-(N-acetyl-beta-D-glucosaminyl-(1-&gt;4)-alpha-D-mannosyl)-L-threonyl-[protein] + UDP + H(+). It participates in protein modification; protein glycosylation. In terms of biological role, O-linked mannose beta-1,4-N-acetylglucosaminyltransferase that transfers UDP-N-acetyl-D-glucosamine to the 4-position of the mannose to generate N-acetyl-D-glucosamine-beta-1,4-O-D-mannosylprotein. Involved in the biosynthesis of the phosphorylated O-mannosyl trisaccharide (N-acetylgalactosamine-beta-3-N-acetylglucosamine-beta-4-(phosphate-6-)mannose), a carbohydrate structure present in alpha-dystroglycan (DAG1), which is required for binding laminin G-like domain-containing extracellular proteins with high affinity. The sequence is that of Protein O-linked-mannose beta-1,4-N-acetylglucosaminyltransferase 2 (POMGNT2) from Homo sapiens (Human).